The following is an 882-amino-acid chain: Translation initiation factor IF-2 (882 aa).

The segment at 38–294 (IEDSQASWVK…KSKHKRKKEN (257 aa)) is disordered. Composition is skewed to basic and acidic residues over residues 66-76 (TRDEAVKKHSG), 109-128 (GRRE…ERHS), and 207-219 (PDNK…DAKR). The span at 282–292 (PGRKSKHKRKK) shows a compositional bias: basic residues. The region spanning 383–556 (ARPPVVTIMG…EMNEIRANPD (174 aa)) is the tr-type G domain. The segment at 392 to 399 (GHVDHGKT) is G1. 392 to 399 (GHVDHGKT) is a GTP binding site. A G2 region spans residues 417–421 (GITQH). The tract at residues 438–441 (DTPG) is G3. Residues 438–442 (DTPGH) and 492–495 (NKID) each bind GTP. The interval 492 to 495 (NKID) is G4. The tract at residues 528–530 (SAK) is G5.

Belongs to the TRAFAC class translation factor GTPase superfamily. Classic translation factor GTPase family. IF-2 subfamily.

It is found in the cytoplasm. One of the essential components for the initiation of protein synthesis. Protects formylmethionyl-tRNA from spontaneous hydrolysis and promotes its binding to the 30S ribosomal subunits. Also involved in the hydrolysis of GTP during the formation of the 70S ribosomal complex. The sequence is that of Translation initiation factor IF-2 from Syntrophomonas wolfei subsp. wolfei (strain DSM 2245B / Goettingen).